Here is a 137-residue protein sequence, read N- to C-terminus: Large ribosomal subunit protein uL16 (137 aa).

Positions Met1–Val20 are disordered. Over residues Arg7–Asn17 the composition is skewed to basic residues.

Belongs to the universal ribosomal protein uL16 family. As to quaternary structure, part of the 50S ribosomal subunit.

Binds 23S rRNA and is also seen to make contacts with the A and possibly P site tRNAs. The sequence is that of Large ribosomal subunit protein uL16 from Coxiella burnetii (strain CbuK_Q154) (Coxiella burnetii (strain Q154)).